The following is a 344-amino-acid chain: WW domain binding protein 1-like (344 aa).

A helical membrane pass occupies residues 42 to 62 (LWWFWLVWTIIIILSCCCVCH). 2 disordered regions span residues 132-250 (LLPP…RFTG) and 302-321 (CLSS…PRPP). Residues 145-173 (PGADQPQGSQGAQSSPLSGPSRSSTRPPS) show a composition bias toward low complexity. The residue at position 173 (Ser-173) is a Phosphoserine. The segment covering 212–228 (LDRDSECKEELLKDSSS) has biased composition (basic and acidic residues).

It localises to the membrane. The sequence is that of WW domain binding protein 1-like (Wbp1l) from Rattus norvegicus (Rat).